The primary structure comprises 319 residues: Acetyl esterase (319 aa).

The Involved in the stabilization of the negatively charged intermediate by the formation of the oxyanion hole signature appears at 91–93 (HGG). Residues S165, D262, and H292 contribute to the active site.

This sequence belongs to the 'GDXG' lipolytic enzyme family. As to quaternary structure, homodimer. Interacts with MalT and MelA.

The protein localises to the cytoplasm. Functionally, displays esterase activity towards short chain fatty esters (acyl chain length of up to 8 carbons). Able to hydrolyze triacetylglycerol (triacetin) and tributyrylglycerol (tributyrin), but not trioleylglycerol (triolein) or cholesterol oleate. Negatively regulates MalT activity by antagonizing maltotriose binding. Inhibits MelA galactosidase activity. The polypeptide is Acetyl esterase (Shigella boydii serotype 18 (strain CDC 3083-94 / BS512)).